We begin with the raw amino-acid sequence, 378 residues long: Mitogen-activated protein kinase mpkC (378 aa).

The Protein kinase domain occupies 20 to 300; it reads YVNPQPIGMG…AQDALRYPYL (281 aa). ATP-binding positions include 26-34 and Lys-49; that span reads IGMGSFGLV. Asp-141 acts as the Proton acceptor in catalysis. Residue Thr-171 is modified to Phosphothreonine. The TXY motif lies at 171–173; the sequence is TGY. Tyr-173 is subject to Phosphotyrosine.

The protein belongs to the protein kinase superfamily. Ser/Thr protein kinase family. MAP kinase subfamily. HOG1 sub-subfamily. Interacts with sakA upon osmotic and cell wall stresses. Mg(2+) is required as a cofactor. Post-translationally, dually phosphorylated on Thr-171 and Tyr-173, which activates the enzyme.

The protein localises to the cytoplasm. It localises to the nucleus. The enzyme catalyses L-seryl-[protein] + ATP = O-phospho-L-seryl-[protein] + ADP + H(+). The catalysed reaction is L-threonyl-[protein] + ATP = O-phospho-L-threonyl-[protein] + ADP + H(+). With respect to regulation, activated by tyrosine and threonine phosphorylation. Functionally, mitogen-activated protein kinase; part of an osmotic and general signal pathways involved in regulation of the response to the cell wall damage, oxidative stress, drug resistance, and establishment of infection. Required for growth on media where sorbitol or mannitol is the sole carbon source. With sakA, plays a redundant or cooperative role in the conidial stress resistance. Also plays a supportive role in osmotic stress adaptation when sakA is deficient. Involved in paradoxical growth, the cell wall integrity (CWI) pathway and biofilm formation. Acts by modulating sakA activity upon exposure to several types o stresses and during cell wall biosynthesis. Also collaborates with sakA to allow ful virulence in a neutropenic murine model of invasive pulmonary aspergillosis. MpkC and sakA have both independent and collaborative functions during the transcriptional response to transient osmotic stress, and mpkC plays a major role in the modulation of the response to DNA metabolism while activating mitochondrial functions and cation transport. The polypeptide is Mitogen-activated protein kinase mpkC (mpkC) (Aspergillus fumigatus (strain ATCC MYA-4609 / CBS 101355 / FGSC A1100 / Af293) (Neosartorya fumigata)).